The sequence spans 155 residues: Transcription antitermination protein NusB (155 aa).

Belongs to the NusB family.

Its function is as follows. Involved in transcription antitermination. Required for transcription of ribosomal RNA (rRNA) genes. Binds specifically to the boxA antiterminator sequence of the ribosomal RNA (rrn) operons. The polypeptide is Transcription antitermination protein NusB (Vibrio atlanticus (strain LGP32) (Vibrio splendidus (strain Mel32))).